The sequence spans 24 residues: Brevinin-1R (24 aa).

A disulfide bond links cysteine 18 and cysteine 24.

Expressed by the skin glands.

The protein localises to the secreted. In terms of biological role, antimicrobial peptide. The sequence is that of Brevinin-1R from Pelophylax ridibundus (Marsh frog).